Reading from the N-terminus, the 378-residue chain is AT-hook motif nuclear-localized protein 5 (378 aa).

3 disordered regions span residues 30–70 (QVAS…AEHR), 88–160 (VQPT…GRKQ), and 302–378 (NNNK…LTRG). The span at 104–113 (VKKKRGRPRK) shows a compositional bias: basic residues. A Bipartite nuclear localization signal motif is present at residues 105–113 (KKKRGRPRK). DNA-binding regions (a.T hook) lie at residues 105-117 (KKKR…YVPD) and 147-159 (KRAR…TGRK). The PPC domain maps to 171-314 (TSAGLAFAPH…KTIKQEIKPK (144 aa)). Composition is skewed to polar residues over residues 316–327 (EPTNSEMETTPG) and 335–345 (STGQHTPQNFP).

As to quaternary structure, interacts with AHL29.

The protein resides in the nucleus. Its function is as follows. Transcription factor that specifically binds AT-rich DNA sequences related to the nuclear matrix attachment regions (MARs). The polypeptide is AT-hook motif nuclear-localized protein 5 (Arabidopsis thaliana (Mouse-ear cress)).